Here is a 247-residue protein sequence, read N- to C-terminus: Type III pantothenate kinase (247 aa).

7–14 is a binding site for ATP; sequence AIGNSRWH. Substrate contacts are provided by residues tyrosine 91 and 95-98; that span reads GLDR. The Proton acceptor role is filled by aspartate 97. K(+) is bound at residue aspartate 117. Residue threonine 120 participates in ATP binding.

This sequence belongs to the type III pantothenate kinase family. Homodimer. NH4(+) is required as a cofactor. The cofactor is K(+).

It is found in the cytoplasm. The enzyme catalyses (R)-pantothenate + ATP = (R)-4'-phosphopantothenate + ADP + H(+). Its pathway is cofactor biosynthesis; coenzyme A biosynthesis; CoA from (R)-pantothenate: step 1/5. Functionally, catalyzes the phosphorylation of pantothenate (Pan), the first step in CoA biosynthesis. The sequence is that of Type III pantothenate kinase from Synechococcus sp. (strain ATCC 27144 / PCC 6301 / SAUG 1402/1) (Anacystis nidulans).